The following is a 401-amino-acid chain: Aspartokinase (401 aa).

The protein belongs to the aspartokinase family.

The catalysed reaction is L-aspartate + ATP = 4-phospho-L-aspartate + ADP. It functions in the pathway amino-acid biosynthesis; L-lysine biosynthesis via DAP pathway; (S)-tetrahydrodipicolinate from L-aspartate: step 1/4. The protein operates within amino-acid biosynthesis; L-methionine biosynthesis via de novo pathway; L-homoserine from L-aspartate: step 1/3. Its pathway is amino-acid biosynthesis; L-threonine biosynthesis; L-threonine from L-aspartate: step 1/5. The chain is Aspartokinase (lysC) from Rickettsia conorii (strain ATCC VR-613 / Malish 7).